A 183-amino-acid chain; its full sequence is Ras-related protein Rap-2a (183 aa).

10–17 contacts GTP; that stretch reads GSGGVGKS. The short motif at 32-40 is the Effector region element; the sequence is YDPTIEDFY. Residues 57–61 and 116–119 contribute to the GTP site; these read DTAGT and NKVD. 2 S-palmitoyl cysteine lipidation sites follow: C176 and C177. Cysteine methyl ester is present on C180. Residue C180 is the site of S-farnesyl cysteine attachment. Residues 181 to 183 constitute a propeptide, removed in mature form; it reads NIQ.

It belongs to the small GTPase superfamily. Ras family. Interacts with PLCE1. Interacts with ARHGAP29, SGSM1, SGSM2 and SGSM3. Interacts (GTP-bound form preferentially) with MAP4K4. Interacts with MINK1. Interacts with cytoskeletal actin. Interacts (GTP-bound form) with RUNDC3A. Interacts (GTP-bound form preferentially) with TNIK (via the CNH domain); the interaction is direct and recruits RAP2A to the E3 ubiquitin ligase NEDD4. Interacts with RGS14; the interaction is GTP-dependent. Post-translationally, ubiquitinated; undergoes 'Lys-63' monoubiquitination and diubiquitination by NEDD4. Multiple lysine residues are probably modified. Ubiquitination requires TNIK, prevents interaction with effectors and inactivates RAP2A. Ubiquitination by the ECS(RAB40B) complex leads to RAP2A localization to lamellipodia plasma membrane, activation, and regulation of sorting at early endosomes for recycling to the lamellipodia plasma membrane. In terms of processing, palmitoylated. Palmitoylation is required for association with recycling endosome membranes and activation of TNIK. In terms of tissue distribution, expressed in granular layer of the cerebellum, forebrain, striatum, layer V of the cortex, olfactory cortex, tubercules, subthalamic and hippocampus, particularly in the CA2 region, to a lesser extent in the CA1 region and the external layer of the dentate gyrus. Expressed in neurons.

The protein resides in the midbody. The protein localises to the cell projection. Its subcellular location is the lamellipodium membrane. It is found in the golgi apparatus. It localises to the recycling endosome membrane. The protein resides in the lysosome. It catalyses the reaction GTP + H2O = GDP + phosphate + H(+). Its activity is regulated as follows. Activated by the guanine nucleotide-exchange factors RAPGEF3 and RAPGEF4 in a cAMP-dependent manner. Nucleotide exchange is also specifically stimulated by RAPGEF5, RASGEF1A and RASGEF1B. Small GTP-binding protein which cycles between a GDP-bound inactive and a GTP-bound active form. In its active form interacts with and regulates several effectors including MAP4K4, MINK1 and TNIK. Part of a signaling complex composed of NEDD4, RAP2A and TNIK which regulates neuronal dendrite extension and arborization during development. More generally, it is part of several signaling cascades and may regulate cytoskeletal rearrangements, cell migration, cell adhesion and cell spreading. The sequence is that of Ras-related protein Rap-2a from Mus musculus (Mouse).